Reading from the N-terminus, the 480-residue chain is Cytochrome c oxidase subunit 1 (480 aa).

The helical transmembrane segment at 22–42 (ISYLWLAYWFGMIGFYMSVLI) threads the bilayer. 2 residues coordinate Ca(2+): Glu45 and Gly50. A run of 8 helical transmembrane segments spans residues 64–84 (LLFT…GLFG), 109–129 (SLLL…LEIG), 151–171 (LIIF…INFI), 194–214 (IVLT…VFLM), 240–260 (LFWF…FGII), 278–298 (MILA…HHMY), 309–329 (YFTT…FNWV), and 343–363 (LILF…TGVV). His69 is a binding site for Fe(II)-heme a. Residue His246 coordinates Cu cation. The segment at residues 246–250 (HPEVY) is a cross-link (1'-histidyl-3'-tyrosine (His-Tyr)). Tyr250 contacts O2. The Cu cation site is built by His295 and His296. Mg(2+) is bound by residues His374 and Asp375. Position 382 (His382) interacts with heme a3. 2 consecutive transmembrane segments (helical) span residues 382–402 (HFHF…IVYI) and 416–436 (LSLM…PMHF). His384 contacts Fe(II)-heme a. Residue Pro447 participates in Ca(2+) binding. Residues 458–478 (FICTLGATMMLVLKLTVLFII) traverse the membrane as a helical segment.

This sequence belongs to the heme-copper respiratory oxidase family. Component of the cytochrome c oxidase (complex IV, CIV), a multisubunit enzyme composed of a catalytic core of 3 subunits and several supernumerary subunits. The complex exists as a monomer or a dimer and forms supercomplexes (SCs) in the inner mitochondrial membrane with ubiquinol-cytochrome c oxidoreductase (cytochrome b-c1 complex, complex III, CIII). It depends on heme as a cofactor. Cu cation serves as cofactor.

The protein resides in the mitochondrion inner membrane. It catalyses the reaction 4 Fe(II)-[cytochrome c] + O2 + 8 H(+)(in) = 4 Fe(III)-[cytochrome c] + 2 H2O + 4 H(+)(out). It functions in the pathway energy metabolism; oxidative phosphorylation. Component of the cytochrome c oxidase, the last enzyme in the mitochondrial electron transport chain which drives oxidative phosphorylation. The respiratory chain contains 3 multisubunit complexes succinate dehydrogenase (complex II, CII), ubiquinol-cytochrome c oxidoreductase (cytochrome b-c1 complex, complex III, CIII) and cytochrome c oxidase (complex IV, CIV), that cooperate to transfer electrons derived from NADH and succinate to molecular oxygen, creating an electrochemical gradient over the inner membrane that drives transmembrane transport and the ATP synthase. Cytochrome c oxidase is the component of the respiratory chain that catalyzes the reduction of oxygen to water. Electrons originating from reduced cytochrome c in the intermembrane space (IMS) are transferred via the dinuclear copper A center (CU(A)) of subunit 2 and heme A of subunit 1 to the active site in subunit 1, a binuclear center (BNC) formed by heme A3 and copper B (CU(B)). The BNC reduces molecular oxygen to 2 water molecules using 4 electrons from cytochrome c in the IMS and 4 protons from the mitochondrial matrix. In Theileria annulata, this protein is Cytochrome c oxidase subunit 1 (MT-CO1).